The primary structure comprises 289 residues: Phosphatidylglycerol--prolipoprotein diacylglyceryl transferase (289 aa).

The next 7 helical transmembrane spans lie at 23–43, 61–81, 99–119, 125–145, 199–219, 226–246, and 259–279; these read ALHW…WLAV, LLYM…VLFY, GGMS…WFAH, FFQV…AGRL, SQLY…NLFI, GSVS…TEFF, and LFSM…LMMV. Arginine 144 contacts a 1,2-diacyl-sn-glycero-3-phospho-(1'-sn-glycerol).

Belongs to the Lgt family.

Its subcellular location is the cell inner membrane. It catalyses the reaction L-cysteinyl-[prolipoprotein] + a 1,2-diacyl-sn-glycero-3-phospho-(1'-sn-glycerol) = an S-1,2-diacyl-sn-glyceryl-L-cysteinyl-[prolipoprotein] + sn-glycerol 1-phosphate + H(+). Its pathway is protein modification; lipoprotein biosynthesis (diacylglyceryl transfer). Functionally, catalyzes the transfer of the diacylglyceryl group from phosphatidylglycerol to the sulfhydryl group of the N-terminal cysteine of a prolipoprotein, the first step in the formation of mature lipoproteins. This chain is Phosphatidylglycerol--prolipoprotein diacylglyceryl transferase, found in Pectobacterium atrosepticum (strain SCRI 1043 / ATCC BAA-672) (Erwinia carotovora subsp. atroseptica).